We begin with the raw amino-acid sequence, 126 residues long: Glycine cleavage system H protein (126 aa).

The region spanning 22-104 is the Lipoyl-binding domain; the sequence is TVTIGITEYA…YEKAWMVKVE (83 aa). Residue Lys-63 is modified to N6-lipoyllysine.

It belongs to the GcvH family. As to quaternary structure, the glycine cleavage system is composed of four proteins: P, T, L and H. Requires (R)-lipoate as cofactor.

Its function is as follows. The glycine cleavage system catalyzes the degradation of glycine. The H protein shuttles the methylamine group of glycine from the P protein to the T protein. Is also involved in protein lipoylation via its role as an octanoyl/lipoyl carrier protein intermediate. The protein is Glycine cleavage system H protein of Staphylococcus saprophyticus subsp. saprophyticus (strain ATCC 15305 / DSM 20229 / NCIMB 8711 / NCTC 7292 / S-41).